Consider the following 87-residue polypeptide: uncharacterized protein (87 aa).

Residues 67–87 (TGGDPREAVVRPADQVEGYTG) form a disordered region.

This is an uncharacterized protein from Mycobacterium bovis (strain ATCC BAA-935 / AF2122/97).